A 572-amino-acid chain; its full sequence is Probable lysosomal cobalamin transporter (572 aa).

A run of 9 helical transmembrane segments spans residues 8-28 (VIWF…SVFI), 40-60 (FVTF…MLLP), 95-115 (IIYY…IPFA), 145-165 (TLTF…APMM), 188-208 (AFTF…AFYT), 314-334 (GGFC…MTVV), 374-394 (IIFA…VVAV), 421-441 (AVLT…LVPG), and 499-519 (VALN…LFLA). Positions 522-544 (GRRRGRGRESVSKHQKKRQSYMR) are disordered.

It belongs to the LIMR family. LMBRD1 subfamily.

It is found in the lysosome membrane. Probable lysosomal cobalamin transporter. Required to export cobalamin from lysosomes allowing its conversion to cofactors. This Aspergillus fumigatus (strain ATCC MYA-4609 / CBS 101355 / FGSC A1100 / Af293) (Neosartorya fumigata) protein is Probable lysosomal cobalamin transporter.